The following is a 406-amino-acid chain: MSSRVGDLSPQQQEALARFRENLQDLLPILPNADDYFLLRWLRARNFDLQKSEDMLRRHMEFRKQQDLDNIVTWQPPEVIQLYDSGGLCGYDYEGCPVYFNIIGSLDPKGLLLSASKQDMIRKRIKVCELLLHECELQTQKLGRKIEMALMVFDMEGLSLKHLWKPAVEVYQQFFSILEANYPETLKNLIVIRAPKLFPVAFNLVKSFMSEETRRKIVILGDNWKQELTKFISPDQLPVEFGGTMTDPDGNPKCLTKINYGGEVPKSYYLCEQVRLQYEHTRSVGRGSSLQVENEILFPGCVLRWQFASDGGDIGFGVFLKTKMGEQQSAREMTEVLPSQRYNAHMVPEDGSLTCLQAGVYVLRFDNTYSRMHAKKLSYTVEVLLPDKASEETLQSLKAMRPSPTQ.

In terms of domain architecture, CRAL-TRIO spans 76-249 (PPEVIQLYDS…EFGGTMTDPD (174 aa)). In terms of domain architecture, GOLD spans 252-383 (PKCLTKINYG…AKKLSYTVEV (132 aa)).

Functionally, probable hydrophobic ligand-binding protein; may play a role in the transport of hydrophobic ligands like tocopherol, squalene and phospholipids. This chain is SEC14-like protein 4 (SEC14L4), found in Homo sapiens (Human).